We begin with the raw amino-acid sequence, 374 residues long: Flagellar P-ring protein 1 (374 aa).

The N-terminal stretch at 1–26 (MVPNLMVIKKHLIGLLLILCPLSLQA) is a signal peptide.

It belongs to the FlgI family. As to quaternary structure, the basal body constitutes a major portion of the flagellar organelle and consists of four rings (L,P,S, and M) mounted on a central rod.

It is found in the periplasm. Its subcellular location is the bacterial flagellum basal body. Functionally, assembles around the rod to form the L-ring and probably protects the motor/basal body from shearing forces during rotation. The chain is Flagellar P-ring protein 1 from Photobacterium profundum (strain SS9).